A 734-amino-acid polypeptide reads, in one-letter code: Fc receptor-like protein 3 (734 aa).

Residues 1–17 (MLLWLLLLILTPGREQS) form the signal peptide. Topologically, residues 18 to 573 (GVAPKAVLLL…GTSRNRTGLT (556 aa)) are extracellular. Ig-like C2-type domains follow at residues 21-98 (PKAV…VEFS), 99-182 (PDWL…KPLN), 192-270 (PVLR…HSIK), 284-369 (PVSN…PILS), 383-470 (PVLT…LRVT), and 476-563 (PVLT…LNVT). 6 disulfides stabilise this stretch: Cys-44–Cys-82, Cys-120–Cys-163, Cys-211–Cys-260, Cys-309–Cys-358, Cys-404–Cys-451, and Cys-497–Cys-544. Residue Asn-561 is glycosylated (N-linked (GlcNAc...) asparagine). Residues 574–594 (AAGITGLVLSILVLAAAAALL) traverse the membrane as a helical segment. The Cytoplasmic portion of the chain corresponds to 595-734 (HYARARRKPG…VPRVLLASDH (140 aa)). Residues 603 to 655 (PGGLSATGTSSHSPSECQEPSSSRPSRIDPQEPTHSKPLAPMELEPMYSNVNP) are disordered. Positions 608–627 (ATGTSSHSPSECQEPSSSRP) are enriched in polar residues. A compositionally biased stretch (basic and acidic residues) spans 628–637 (SRIDPQEPTH). 4 short sequence motifs (ITIM motif) span residues 648–653 (PMYSNV), 660–665 (PIYSQI), 690–695 (VLYSEL), and 720–725 (ENYENV). A phosphotyrosine mark is found at Tyr-650, Tyr-662, Tyr-692, and Tyr-722. The disordered stretch occupies residues 695–734 (LKKTHPDDSAGEASSRGRAHEEDDEENYENVPRVLLASDH).

In terms of assembly, interacts (via phosphorylated ITIM motifs) with phosphatases INPP5D, PTPN6 and PTPN11. Interacts (via ITIM motifs) SYK and ZAP70. Interacts with IZUMO1R/JUNO. Interacts (via extracellular domain) with IZUMO1; the interaction replaces IZUMO1R/JUNO as IZUMO1 receptor after adhesion between sperm and egg. In terms of processing, phosphorylated on cytoplasmic tyrosines; required for interaction with protein tyrosine phosphatases and protein tyrosine kinases. Primarily expressed in secondary lymphoid tissues by mature subsets of B-cells. Low expression on transitional B cells which increases to higher surface expression on mature and memory B-cells with innate-like features (at protein level). Expressed a low levels in naive and germinal center B-cells but also expressed in NK cells (at protein level). Expressed in unfertilized oocytes (at protein level). Expressed in a population of thymically derived naturally occurring regulatory T-cells that exhibits a memory phenotype, specialized in suppressing immune response to self-antigens. Detected in spleen, lymph node, peripheral blood lymphocytes, thymus, bone marrow, kidney, salivary gland, adrenal gland and uterus.

It localises to the cell membrane. The protein localises to the cell projection. The protein resides in the microvillus membrane. Functionally, promotes TLR9-induced B-cell proliferation, activation and survival but inhibits antibody production and suppresses plasma cell differentiation. Enhances activation of NF-kappa-B and MAPK signaling pathways in TLR9 stimulated B-cells. Has inhibitory potentional on B-cell receptor (BCR)-mediated signaling, possibly through association with SH2 domain-containing phosphatases. Inhibits cell tyrosine phosphorylation, calcium mobilization and activation-induced cell death induced through BCR signaling. Regulatory T-cells expressing FCRL3 exhibit a memory phenotype, are relatively nonresponsive to antigenic stimulation in presence of IL2 and have reduced capacity to suppress the proliferation of effector T-cells. Acts as a human-specific epitope on the cell surface of oocytes (oolemma) and plays a role during sperm-egg adhesion and fusion. Interacts with the IZUMO1-IZUMO1R/JUNO sperm-egg complex and replaces IZUMO1R/JUNO as IZUMO1 receptor during fertilization, thereby permitting species-specific gamete fusion. In Homo sapiens (Human), this protein is Fc receptor-like protein 3.